Reading from the N-terminus, the 78-residue chain is Esculentin-2ISa (78 aa).

The N-terminal stretch at 1–22 (MFTLKKSLLLLFFLGTISLSVC) is a signal peptide. Positions 23–39 (KQERDADYEDKGEVEEV) are cleaved as a propeptide — removed in mature form. C72 and C78 are oxidised to a cystine.

Expressed by the skin glands.

The protein localises to the secreted. Functionally, has antimicrobial activity against Gram-negative bacterium E.coli ATCC 8739 (MIC=12.5 ug), against Gram positive bacteria S.aureus ATCC 6538 (MIC=3.1 ug), methicillin-resistant S.aureus ATCC 43300 (MIC=25 ug), B.subtilis ATCC 6633 (MIC=6.3 ug) and against fungus C.albicans ATCC 90028 (MIC=100 ug). The polypeptide is Esculentin-2ISa (Odorrana ishikawae (Ishikawa's frog)).